The primary structure comprises 355 residues: Probable butyrate kinase (355 aa).

The protein belongs to the acetokinase family.

Its subcellular location is the cytoplasm. The catalysed reaction is butanoate + ATP = butanoyl phosphate + ADP. The protein is Probable butyrate kinase of Clostridium botulinum (strain Eklund 17B / Type B).